The sequence spans 265 residues: Putative hydro-lyase Teth514_1597 (265 aa).

The protein belongs to the D-glutamate cyclase family.

The chain is Putative hydro-lyase Teth514_1597 from Thermoanaerobacter sp. (strain X514).